The primary structure comprises 40 residues: Photosystem II reaction center protein J (40 aa).

The helical transmembrane segment at 8–28 (IPLWIIGTGAGILVIGLIGIF) threads the bilayer.

It belongs to the PsbJ family. PSII is composed of 1 copy each of membrane proteins PsbA, PsbB, PsbC, PsbD, PsbE, PsbF, PsbH, PsbI, PsbJ, PsbK, PsbL, PsbM, PsbT, PsbX, PsbY, PsbZ, Psb30/Ycf12, at least 3 peripheral proteins of the oxygen-evolving complex and a large number of cofactors. It forms dimeric complexes.

Its subcellular location is the plastid. The protein localises to the chloroplast thylakoid membrane. One of the components of the core complex of photosystem II (PSII). PSII is a light-driven water:plastoquinone oxidoreductase that uses light energy to abstract electrons from H(2)O, generating O(2) and a proton gradient subsequently used for ATP formation. It consists of a core antenna complex that captures photons, and an electron transfer chain that converts photonic excitation into a charge separation. This chain is Photosystem II reaction center protein J, found in Aethionema grandiflorum (Persian stone-cress).